A 363-amino-acid polypeptide reads, in one-letter code: NAD(P)H-quinone oxidoreductase subunit 1, chloroplastic (363 aa).

The next 6 helical transmembrane spans lie at 28-48 (WVLVPILTTVLGITIGVLVIV), 98-118 (FSIGPSIAVISILLSYSVIPF), 127-147 (LPIGVFLWIAISSVAPIGLLM), 248-268 (YSGIKFGLFYVASYLNLLVSS), 300-320 (VFGMTISIFITLAKTYLFLFI), and 343-363 (FLLPISLGNLLLTTSFQLFSL).

It belongs to the complex I subunit 1 family. NDH is composed of at least 16 different subunits, 5 of which are encoded in the nucleus.

It localises to the plastid. Its subcellular location is the chloroplast thylakoid membrane. The catalysed reaction is a plastoquinone + NADH + (n+1) H(+)(in) = a plastoquinol + NAD(+) + n H(+)(out). It catalyses the reaction a plastoquinone + NADPH + (n+1) H(+)(in) = a plastoquinol + NADP(+) + n H(+)(out). Its function is as follows. NDH shuttles electrons from NAD(P)H:plastoquinone, via FMN and iron-sulfur (Fe-S) centers, to quinones in the photosynthetic chain and possibly in a chloroplast respiratory chain. The immediate electron acceptor for the enzyme in this species is believed to be plastoquinone. Couples the redox reaction to proton translocation, and thus conserves the redox energy in a proton gradient. The chain is NAD(P)H-quinone oxidoreductase subunit 1, chloroplastic from Cucumis sativus (Cucumber).